The primary structure comprises 61 residues: Metallothionein-1B (61 aa).

The beta stretch occupies residues 1-29 (MDPNCSCTTGGSCACAGSCKCKECKCTSC). A divalent metal cation-binding residues include cysteine 5, cysteine 7, cysteine 13, cysteine 15, cysteine 19, cysteine 21, cysteine 24, cysteine 26, cysteine 29, cysteine 33, cysteine 34, cysteine 36, cysteine 37, cysteine 41, cysteine 44, cysteine 48, cysteine 50, cysteine 57, cysteine 59, and cysteine 60. The alpha stretch occupies residues 30–61 (KKCCCSCCPVGCAKCAQGCVCKGSSEKCRCCA).

It belongs to the metallothionein superfamily. Type 1 family. In terms of assembly, monomer.

Functionally, metallothioneins have a high content of cysteine residues that bind various heavy metals; these proteins are transcriptionally regulated by both heavy metals and glucocorticoids. The chain is Metallothionein-1B (MT1B) from Homo sapiens (Human).